A 186-amino-acid polypeptide reads, in one-letter code: Large ribosomal subunit protein uL5 (186 aa).

The protein belongs to the universal ribosomal protein uL5 family. In terms of assembly, part of the 50S ribosomal subunit; part of the 5S rRNA/L5/L18/L25 subcomplex. Contacts the 5S rRNA and the P site tRNA. Forms a bridge to the 30S subunit in the 70S ribosome.

This is one of the proteins that bind and probably mediate the attachment of the 5S RNA into the large ribosomal subunit, where it forms part of the central protuberance. In the 70S ribosome it contacts protein S13 of the 30S subunit (bridge B1b), connecting the 2 subunits; this bridge is implicated in subunit movement. Contacts the P site tRNA; the 5S rRNA and some of its associated proteins might help stabilize positioning of ribosome-bound tRNAs. The chain is Large ribosomal subunit protein uL5 from Phenylobacterium zucineum (strain HLK1).